The following is a 136-amino-acid chain: Salivary protein 15 Iric-2 (136 aa).

Residues 1 to 22 (MESFVAMKVVCIVLLFVIAAEA) form the signal peptide. An N-linked (GlcNAc...) asparagine glycan is attached at N105. The CD4-binding stretch occupies residues 117 to 136 (GPKNQTCENKDQCVPHIPGC).

This sequence belongs to the salp15 family. As to quaternary structure, interacts with host CD4. Interacts with host DC-SIGN (CD209). Interacts with Borrelia outer surface protein C (OspC). As to expression, expressed in salivary glands. Detected in fed adult female.

It localises to the secreted. Its function is as follows. Salivary tick protein that downregulates host immune system by binding to both dendritic cells, and CD4(+) T cells. Specifically binds to the CD4 coreceptor on T cells. This interaction prevents the activation of the Src kinase, Lck, and its downstream substrate Zap-70, and results in deficient activation of PLCgamma1, the repression of calcium fluxes triggered by T-cell antigen receptor (TCR) ligation, and a subsequent reduction in interleukin-2 production. This salivary protein also binds to DC-SIGN (CD209) on dendritic cells (DC) and activates the Raf-1 kinase/MEK signaling pathway that results in down-regulating expression of pro-inflammatory cytokines. Furthermore, it inhibits T cell proliferation induced by DCs. In addition, it inhibits in vitro keratinocyte inflammation induced by Borrelia burgdorferi or by the major outer surface protein (OspC) of Borrelia. In addition, it downregulates chemokines and monocyte chemoattractant protein 1, as well as several antimicrobial peptides such as defensins, cathelicidin, psoriasin, and RNase 7. Apart from its immunomodulatory activities, it is also associated with protection of Borrelia spirochetes from antibody-mediated killing through its binding to OspC. In vivo, tests on different immune disease animal models show promising therapeutic results, e.g., in inhibiting HIV infection, experimental autoimmune encephalomyelitis, transplantation rejection, and asthma. This is Salivary protein 15 Iric-2 from Ixodes ricinus (Common tick).